The sequence spans 191 residues: Putative resolvase L103 (191 aa).

A DNA-binding region (H-T-H motif) is located at residues 11–30 (LEVLKVHYQTLYRMEEKGLI). In terms of domain architecture, Resolvase/invertase-type recombinase catalytic spans 59-191 (KGICYCRVSS…KKSGKLKAKK (133 aa)). A coiled-coil region spans residues 65-91 (RVSSKKQIKDLNRQVEYMEKNYPEYEI). Ser-67 functions as the O-(5'-phospho-DNA)-serine intermediate in the catalytic mechanism.

Belongs to the site-specific recombinase resolvase family.

Resolvase catalyzes the resolution (a site-specific recombination) of the cointegrated replicon to yield the final transposition products. This Acanthamoeba polyphaga (Amoeba) protein is Putative resolvase L103.